The primary structure comprises 358 residues: 3-isopropylmalate dehydrogenase (358 aa).

Position 77–90 (77–90 (GPKWTNLPPDQQPE)) interacts with NAD(+). Substrate-binding residues include Arg98, Arg108, Arg137, and Asp226. Mg(2+)-binding residues include Asp226, Asp250, and Asp254. 284 to 296 (GSAPDIAGKGIAN) serves as a coordination point for NAD(+).

The protein belongs to the isocitrate and isopropylmalate dehydrogenases family. LeuB type 1 subfamily. In terms of assembly, homodimer. Requires Mg(2+) as cofactor. It depends on Mn(2+) as a cofactor.

It is found in the cytoplasm. The enzyme catalyses (2R,3S)-3-isopropylmalate + NAD(+) = 4-methyl-2-oxopentanoate + CO2 + NADH. It functions in the pathway amino-acid biosynthesis; L-leucine biosynthesis; L-leucine from 3-methyl-2-oxobutanoate: step 3/4. Its function is as follows. Catalyzes the oxidation of 3-carboxy-2-hydroxy-4-methylpentanoate (3-isopropylmalate) to 3-carboxy-4-methyl-2-oxopentanoate. The product decarboxylates to 4-methyl-2 oxopentanoate. The sequence is that of 3-isopropylmalate dehydrogenase from Haemophilus influenzae (strain 86-028NP).